Here is a 192-residue protein sequence, read N- to C-terminus: dCTP deaminase, dUMP-forming (192 aa).

Residues 101 to 106 (KSSLGR), Asp119, 127 to 129 (TLE), Gln148, Tyr162, and Gln174 each bind dCTP. The active-site Proton donor/acceptor is the Glu129. A disordered region spans residues 162–192 (YGSGADGSRYQGQRGPTASRSHVKFHRTHVE). The span at 171-181 (YQGQRGPTASR) shows a compositional bias: polar residues. Residues 182–192 (SHVKFHRTHVE) show a composition bias toward basic residues.

It belongs to the dCTP deaminase family. In terms of assembly, homotrimer.

The enzyme catalyses dCTP + 2 H2O = dUMP + NH4(+) + diphosphate. It functions in the pathway pyrimidine metabolism; dUMP biosynthesis; dUMP from dCTP: step 1/1. Bifunctional enzyme that catalyzes both the deamination of dCTP to dUTP and the hydrolysis of dUTP to dUMP without releasing the toxic dUTP intermediate. In Beutenbergia cavernae (strain ATCC BAA-8 / DSM 12333 / CCUG 43141 / JCM 11478 / NBRC 16432 / NCIMB 13614 / HKI 0122), this protein is dCTP deaminase, dUMP-forming.